The following is a 197-amino-acid chain: RNA-binding protein Rsf1 (197 aa).

Positions 7–80 constitute an RRM domain; it reads TRVYVGNLTD…SQLRVEISKG (74 aa). A disordered region spans residues 74–197; sequence RVEISKGRPR…SRSPVGNHRF (124 aa). A compositionally biased stretch (basic and acidic residues) spans 89–102; the sequence is GPMDRGGRRGDFGR. At threonine 106 the chain carries Phosphothreonine. 2 stretches are compositionally biased toward low complexity: residues 117 to 144 and 166 to 176; these read QRGS…SYNG and RYSSGSSASYG. A phosphoserine mark is found at serine 168, serine 171, serine 174, serine 188, and serine 190.

This sequence belongs to the splicing factor SR family. Extensively phosphorylated on serine residues in the RS domain.

The protein localises to the nucleus. May control important aspects of development. The chain is RNA-binding protein Rsf1 (Rsf1) from Drosophila melanogaster (Fruit fly).